The following is a 281-amino-acid chain: Nucleotide-binding protein TRQ2_1124 (281 aa).

9 to 16 (GLSGAGKT) is a binding site for ATP. GTP is bound at residue 58–61 (DVRS).

Belongs to the RapZ-like family.

In terms of biological role, displays ATPase and GTPase activities. This Thermotoga sp. (strain RQ2) protein is Nucleotide-binding protein TRQ2_1124.